A 974-amino-acid polypeptide reads, in one-letter code: Bifunctional glutamine synthetase adenylyltransferase/adenylyl-removing enzyme (974 aa).

Positions 1–464 are adenylyl removase; that stretch reads MKNAFLKTQL…HYAALFENEQ (464 aa). The tract at residues 468-974 is adenylyl transferase; it reads LEIGNLVFTG…YSIFKQVMKY (507 aa).

It belongs to the GlnE family. Mg(2+) serves as cofactor.

It carries out the reaction [glutamine synthetase]-O(4)-(5'-adenylyl)-L-tyrosine + phosphate = [glutamine synthetase]-L-tyrosine + ADP. The catalysed reaction is [glutamine synthetase]-L-tyrosine + ATP = [glutamine synthetase]-O(4)-(5'-adenylyl)-L-tyrosine + diphosphate. Its function is as follows. Involved in the regulation of glutamine synthetase GlnA, a key enzyme in the process to assimilate ammonia. When cellular nitrogen levels are high, the C-terminal adenylyl transferase (AT) inactivates GlnA by covalent transfer of an adenylyl group from ATP to specific tyrosine residue of GlnA, thus reducing its activity. Conversely, when nitrogen levels are low, the N-terminal adenylyl removase (AR) activates GlnA by removing the adenylyl group by phosphorolysis, increasing its activity. The regulatory region of GlnE binds the signal transduction protein PII (GlnB) which indicates the nitrogen status of the cell. This is Bifunctional glutamine synthetase adenylyltransferase/adenylyl-removing enzyme from Bartonella henselae (strain ATCC 49882 / DSM 28221 / CCUG 30454 / Houston 1) (Rochalimaea henselae).